The sequence spans 1024 residues: Beta-galactosidase (1024 aa).

Residues asparagine 103 and aspartate 202 each contribute to the substrate site. Aspartate 202 is a binding site for Na(+). 3 residues coordinate Mg(2+): glutamate 417, histidine 419, and glutamate 462. Residues glutamate 462 and 538–541 (EYAH) each bind substrate. Glutamate 462 serves as the catalytic Proton donor. Glutamate 538 (nucleophile) is an active-site residue. Position 598 (asparagine 598) interacts with Mg(2+). 2 residues coordinate Na(+): phenylalanine 602 and asparagine 605. Residues asparagine 605 and tryptophan 1000 each contribute to the substrate site.

The protein belongs to the glycosyl hydrolase 2 family. As to quaternary structure, homotetramer. The cofactor is Mg(2+). It depends on Na(+) as a cofactor.

It catalyses the reaction Hydrolysis of terminal non-reducing beta-D-galactose residues in beta-D-galactosides.. The chain is Beta-galactosidase from Escherichia coli O1:K1 / APEC.